Consider the following 383-residue polypeptide: Erythronate-4-phosphate dehydrogenase (383 aa).

Substrate-binding residues include serine 45 and threonine 66. NAD(+) is bound by residues aspartate 146, threonine 174, 205–207 (ASR), and aspartate 231. Residue arginine 207 is part of the active site. Glutamate 236 is an active-site residue. Histidine 253 serves as the catalytic Proton donor. NAD(+) is bound at residue glycine 256. Tyrosine 257 contacts substrate.

The protein belongs to the D-isomer specific 2-hydroxyacid dehydrogenase family. PdxB subfamily. Homodimer.

It localises to the cytoplasm. It catalyses the reaction 4-phospho-D-erythronate + NAD(+) = (R)-3-hydroxy-2-oxo-4-phosphooxybutanoate + NADH + H(+). The protein operates within cofactor biosynthesis; pyridoxine 5'-phosphate biosynthesis; pyridoxine 5'-phosphate from D-erythrose 4-phosphate: step 2/5. Catalyzes the oxidation of erythronate-4-phosphate to 3-hydroxy-2-oxo-4-phosphonooxybutanoate. The sequence is that of Erythronate-4-phosphate dehydrogenase from Pseudomonas entomophila (strain L48).